The sequence spans 518 residues: Membrane-bound lytic murein transglycosylase F (518 aa).

An N-terminal signal peptide occupies residues 1 to 21; sequence MKKLKINYLFIGILALLLAVA. The non-LT domain stretch occupies residues 22-269; it reads LWPSIPWFGK…RIEEKYLGHG (248 aa). Residues 270–518 form an LT domain region; sequence DDFDYVDTRT…SRKGSEEKQN (249 aa). The active site involves glutamate 314.

It in the N-terminal section; belongs to the bacterial solute-binding protein 3 family. This sequence in the C-terminal section; belongs to the transglycosylase Slt family.

It is found in the cell outer membrane. It carries out the reaction Exolytic cleavage of the (1-&gt;4)-beta-glycosidic linkage between N-acetylmuramic acid (MurNAc) and N-acetylglucosamine (GlcNAc) residues in peptidoglycan, from either the reducing or the non-reducing ends of the peptidoglycan chains, with concomitant formation of a 1,6-anhydrobond in the MurNAc residue.. Murein-degrading enzyme that degrades murein glycan strands and insoluble, high-molecular weight murein sacculi, with the concomitant formation of a 1,6-anhydromuramoyl product. Lytic transglycosylases (LTs) play an integral role in the metabolism of the peptidoglycan (PG) sacculus. Their lytic action creates space within the PG sacculus to allow for its expansion as well as for the insertion of various structures such as secretion systems and flagella. In Shigella boydii serotype 18 (strain CDC 3083-94 / BS512), this protein is Membrane-bound lytic murein transglycosylase F.